The chain runs to 332 residues: Glycerol-3-phosphate dehydrogenase [NAD(P)+] (332 aa).

4 residues coordinate NADPH: S11, F12, K32, and K106. Sn-glycerol 3-phosphate-binding residues include K106, G137, and S139. NADPH is bound at residue A141. K192, D245, S255, R256, and N257 together coordinate sn-glycerol 3-phosphate. The Proton acceptor role is filled by K192. R256 serves as a coordination point for NADPH. V280 and E282 together coordinate NADPH.

The protein belongs to the NAD-dependent glycerol-3-phosphate dehydrogenase family.

The protein resides in the cytoplasm. The enzyme catalyses sn-glycerol 3-phosphate + NAD(+) = dihydroxyacetone phosphate + NADH + H(+). It carries out the reaction sn-glycerol 3-phosphate + NADP(+) = dihydroxyacetone phosphate + NADPH + H(+). The protein operates within membrane lipid metabolism; glycerophospholipid metabolism. Catalyzes the reduction of the glycolytic intermediate dihydroxyacetone phosphate (DHAP) to sn-glycerol 3-phosphate (G3P), the key precursor for phospholipid synthesis. The chain is Glycerol-3-phosphate dehydrogenase [NAD(P)+] from Staphylococcus epidermidis (strain ATCC 35984 / DSM 28319 / BCRC 17069 / CCUG 31568 / BM 3577 / RP62A).